We begin with the raw amino-acid sequence, 428 residues long: Adenylosuccinate synthetase (428 aa).

GTP is bound by residues 12-18 (GDEGKGK) and 40-42 (GHT). Asp13 (proton acceptor) is an active-site residue. Asp13 and Gly40 together coordinate Mg(2+). IMP is bound by residues 13–16 (DEGK), 38–41 (NAGH), Thr130, Arg144, Gln225, Thr240, and Arg304. His41 functions as the Proton donor in the catalytic mechanism. 300–306 (VTTGRAR) is a substrate binding site. GTP contacts are provided by residues Arg306, 332 to 334 (KID), and 414 to 416 (SVG).

It belongs to the adenylosuccinate synthetase family. In terms of assembly, homodimer. Mg(2+) serves as cofactor.

The protein resides in the cytoplasm. The enzyme catalyses IMP + L-aspartate + GTP = N(6)-(1,2-dicarboxyethyl)-AMP + GDP + phosphate + 2 H(+). The protein operates within purine metabolism; AMP biosynthesis via de novo pathway; AMP from IMP: step 1/2. Its function is as follows. Plays an important role in the de novo pathway of purine nucleotide biosynthesis. Catalyzes the first committed step in the biosynthesis of AMP from IMP. This is Adenylosuccinate synthetase from Clostridium kluyveri (strain ATCC 8527 / DSM 555 / NBRC 12016 / NCIMB 10680 / K1).